We begin with the raw amino-acid sequence, 267 residues long: tRNA pseudouridine synthase A (267 aa).

Asp-53 serves as the catalytic Nucleophile. Position 114 (Tyr-114) interacts with substrate.

Belongs to the tRNA pseudouridine synthase TruA family. Homodimer.

The enzyme catalyses uridine(38/39/40) in tRNA = pseudouridine(38/39/40) in tRNA. In terms of biological role, formation of pseudouridine at positions 38, 39 and 40 in the anticodon stem and loop of transfer RNAs. This chain is tRNA pseudouridine synthase A, found in Chlamydia trachomatis serovar L2b (strain UCH-1/proctitis).